The primary structure comprises 251 residues: Large ribosomal subunit protein uL16m (251 aa).

The N-terminal 29 residues, 1–29 (MWRLLSGARAPVLRATLSDSWAAPPARAG), are a transit peptide targeting the mitochondrion.

This sequence belongs to the universal ribosomal protein uL16 family. In terms of assembly, component of the mitochondrial ribosome large subunit (39S) which comprises a 16S rRNA and about 50 distinct proteins.

It localises to the mitochondrion. The chain is Large ribosomal subunit protein uL16m (MRPL16) from Bos taurus (Bovine).